Consider the following 130-residue polypeptide: Small ribosomal subunit protein uS11c (130 aa).

It belongs to the universal ribosomal protein uS11 family. Part of the 30S ribosomal subunit.

The protein resides in the plastid. It is found in the chloroplast. The sequence is that of Small ribosomal subunit protein uS11c from Angiopteris evecta (Mule's foot fern).